The chain runs to 312 residues: Bifunctional pinoresinol-lariciresinol reductase (312 aa).

NADP(+)-binding positions include 10-16, R35, and K44; that span reads GGTGYIG. K136 serves as the catalytic Proton acceptor. Position 140 (R140) interacts with NADP(+). H268 contributes to the substrate binding site.

It belongs to the NmrA-type oxidoreductase family. Isoflavone reductase subfamily. In terms of assembly, dimer. In terms of tissue distribution, expressed in seed coats, but not in embryos, leaves, stems and roots.

Its function is as follows. Reductase involved in lignan biosynthesis. Catalyzes the sequential conversion of pinoresinol into lariciresinol and of lariciresinol into secoisolariciresinol. Abstracts the 4R-hydride from the NADPH cofactor during catalysis. The chain is Bifunctional pinoresinol-lariciresinol reductase from Linum usitatissimum (Flax).